The primary structure comprises 165 residues: Choriogonadotropin subunit beta (165 aa).

The signal sequence occupies residues 1-20 (METLQGLLLWLLLSMGGAQA). Cystine bridges form between C29–C77, C43–C92, C46–C130, C54–C108, C58–C110, and C113–C120. N-linked (GlcNAc...) asparagine glycosylation is found at N33 and N50. The tract at residues 131-165 (DDPNLQASSSSKDPPPSPPSPSRLLEPAGTPFLPQ) is disordered. Residues S141, S147, and S152 are each glycosylated (O-linked (GalNAc...) serine).

Belongs to the glycoprotein hormones subunit beta family. As to quaternary structure, heterodimer of a common alpha chain and a unique beta chain which confers biological specificity to thyrotropin, lutropin, follitropin and gonadotropin. Placenta.

It is found in the secreted. Its function is as follows. Stimulates the ovaries to synthesize the steroids that are essential for the maintenance of pregnancy. In Papio anubis (Olive baboon), this protein is Choriogonadotropin subunit beta (CGB).